A 222-amino-acid chain; its full sequence is Mediator of RNA polymerase II transcription subunit 7 (222 aa).

A disordered region spans residues 34 to 55 (YKEKKAASAKQTAPNNSNGGSE). Polar residues predominate over residues 42 to 53 (AKQTAPNNSNGG).

It belongs to the Mediator complex subunit 7 family. In terms of assembly, component of the Mediator complex, which is composed of at least 21 subunits that form three structurally distinct submodules. The Mediator head module contains MED6, MED8, MED11, SRB4/MED17, SRB5/MED18, ROX3/MED19, SRB2/MED20 and SRB6/MED22, the middle module contains MED1, MED4, NUT1/MED5, MED7, CSE2/MED9, NUT2/MED10, SRB7/MED21 and SOH1/MED31, and the tail module contains MED2, PGD1/MED3, RGR1/MED14, GAL11/MED15 and SIN4/MED16. The head and the middle modules interact directly with RNA polymerase II, whereas the elongated tail module interacts with gene-specific regulatory proteins. MED7 interacts directly with MED1, MED4 and SRB7/MED21.

Its subcellular location is the nucleus. Its function is as follows. Component of the Mediator complex, a coactivator involved in the regulated transcription of nearly all RNA polymerase II-dependent genes. Mediator functions as a bridge to convey information from gene-specific regulatory proteins to the basal RNA polymerase II transcription machinery. The Mediator complex, having a compact conformation in its free form, is recruited to promoters by direct interactions with regulatory proteins and serves for the assembly of a functional preinitiation complex with RNA polymerase II and the general transcription factors. The Mediator complex unfolds to an extended conformation and partially surrounds RNA polymerase II, specifically interacting with the unphosphorylated form of the C-terminal domain (CTD) of RNA polymerase II. The Mediator complex dissociates from the RNA polymerase II holoenzyme and stays at the promoter when transcriptional elongation begins. This Saccharomyces cerevisiae (strain ATCC 204508 / S288c) (Baker's yeast) protein is Mediator of RNA polymerase II transcription subunit 7 (MED7).